Consider the following 609-residue polypeptide: Grainyhead-like protein 1 homolog (609 aa).

A transcription activation region spans residues 1–91 (MTQDYDNKRP…EHDHADHEHS (91 aa)). The tract at residues 183–207 (SDHFTSNNQPPNSQRRTPDSTFSET) is disordered. Residues 185-206 (HFTSNNQPPNSQRRTPDSTFSE) are compositionally biased toward polar residues. The Grh/CP2 DB domain occupies 239–465 (AGNNFEYTLE…DLDTQPVLFI (227 aa)). Interaction with DNA regions lie at residues 371-380 (TDFSSQKGVK) and 418-421 (RKIR).

Belongs to the grh/CP2 family. Grainyhead subfamily. Binds DNA as homodimer.

The protein localises to the nucleus. Transcription factor involved in epithelial development. Binds directly to the consensus DNA sequence 5'-AACCGGTT-3' and modulates expression of epidermal-specific genes, including XK81A1. Important regulator of DSG1 in the context of epidermal differentiation. Regulates the maintenance of skin barrier. No genetic interaction with GRHL3, nor functional cooperativity due to diverse target gene selectivity during epithelia development. Functions downstream of BMP-signaling cascade modulating endogenous bmp4-responsive targets. The protein is Grainyhead-like protein 1 homolog of Xenopus laevis (African clawed frog).